The sequence spans 432 residues: Trigger factor (432 aa).

In terms of domain architecture, PPIase FKBP-type spans 163-248; it reads GDVVVLDFAA…VHAVKERRLP (86 aa).

This sequence belongs to the FKBP-type PPIase family. Tig subfamily.

It localises to the cytoplasm. It catalyses the reaction [protein]-peptidylproline (omega=180) = [protein]-peptidylproline (omega=0). In terms of biological role, involved in protein export. Acts as a chaperone by maintaining the newly synthesized protein in an open conformation. Functions as a peptidyl-prolyl cis-trans isomerase. This is Trigger factor from Nitratidesulfovibrio vulgaris (strain DSM 19637 / Miyazaki F) (Desulfovibrio vulgaris).